The primary structure comprises 398 residues: Elongation factor Tu (398 aa).

The tr-type G domain maps to 10-207; it reads KPHVNIGTIG…TVDSYIPEPE (198 aa). The tract at residues 19 to 26 is G1; that stretch reads GHVDHGKT. 19–26 contributes to the GTP binding site; the sequence is GHVDHGKT. Residue Thr-26 coordinates Mg(2+). The interval 63–67 is G2; that stretch reads GITIN. A G3 region spans residues 84-87; it reads DAPG. GTP is bound by residues 84–88 and 139–142; these read DAPGH and NKVD. A G4 region spans residues 139-142; the sequence is NKVD. The G5 stretch occupies residues 177–179; sequence SAL.

It belongs to the TRAFAC class translation factor GTPase superfamily. Classic translation factor GTPase family. EF-Tu/EF-1A subfamily. In terms of assembly, monomer.

The protein localises to the cytoplasm. The catalysed reaction is GTP + H2O = GDP + phosphate + H(+). Its function is as follows. GTP hydrolase that promotes the GTP-dependent binding of aminoacyl-tRNA to the A-site of ribosomes during protein biosynthesis. This chain is Elongation factor Tu, found in Streptococcus equi subsp. zooepidemicus (strain MGCS10565).